Reading from the N-terminus, the 21-residue chain is S-layer protein 2 (21 aa).

It is found in the secreted. It localises to the cell wall. Its subcellular location is the S-layer. In terms of biological role, the S-layer is a paracrystalline mono-layered assembly of proteins which coat the surface of bacteria. This chain is S-layer protein 2, found in Bacillus thuringiensis subsp. konkukian.